The chain runs to 512 residues: Cytochrome P450 monooxygenase astD (512 aa).

A helical membrane pass occupies residues 19–39; the sequence is MGISILVMLSTFLALGTIFVY. N-linked (GlcNAc...) asparagine glycans are attached at residues N191 and N413. C449 provides a ligand contact to heme.

It belongs to the cytochrome P450 family. Heme serves as cofactor.

It is found in the membrane. Its pathway is secondary metabolite biosynthesis; terpenoid biosynthesis. Cytochrome P450 monooxygenase; part of the gene cluster that mediates the biosynthesis of astellolides, drimane-type sesquiterpene esters that show antimicrobial, anti-inflammatory, and anti-tumor activities. The first step in astellolide biosynthesis is performed by the sesquiterpene cyclase astC that catalyzes the formation of drimanyl pyrophosphate from farnesyl pyrophosphate. Drimanyl pyrophosphate is then dephosphorylated by the sesquiterpene phosphatase astI to produce drimanyl monophosphate which is further dephosphorylated to drim-8-ene-11-ol by atsK. Drim-8-ene-11-ol is converted to confertifolin, probably by the cytochrome P450 monooxygenase astD and/or the dehydrogenase astE. The cytochrome P450 monooxygenases astB, astF and astJ then hydroxylate confertifolin at C6, C14, or C15 to form trihydroxy confertifolin. The nonribosomal peptide synthetase astA catalyzes ester bond formation between trihydroxy contifolin and benzoic acid (BA) or 4-hydroxy benzoic acid (4HBA), leading to the formation of dideacetyl astellolides A and B, respectively. Finally, the O-acetyltransferase astG converts dideacetyl astellolides A and B into deacetyl astellolides A and B. The polypeptide is Cytochrome P450 monooxygenase astD (Aspergillus oryzae (strain ATCC 42149 / RIB 40) (Yellow koji mold)).